The primary structure comprises 392 residues: Tropomodulin (392 aa).

Disordered regions lie at residues 1 to 30 (MSQA…QLPS), 59 to 90 (DLNN…GPYK), and 118 to 138 (QKRG…PENG). Positions 16 to 29 (SAPSANSQQGTQLP) are enriched in polar residues. Basic and acidic residues-rich tracts occupy residues 76–90 (RCRD…GPYK) and 122–138 (KVYD…PENG).

This sequence belongs to the tropomodulin family. Binds to the N-terminus of actin.

It localises to the cytoplasm. Its subcellular location is the cytoskeleton. In terms of biological role, acts as the pointed end capping protein which maintains the length and dynamics of the actin filament. Blocks the elongation and depolymerization of the actin filaments at the pointed end. The chain is Tropomodulin (unc-94) from Caenorhabditis elegans.